A 432-amino-acid polypeptide reads, in one-letter code: GTPase Obg (432 aa).

Residues 1–159 (MKFIDTAKFT…YEVKAELKVL (159 aa)) form the Obg domain. The region spanning 160-332 (ADVGFVGLPN…LLLKIAKELE (173 aa)) is the OBG-type G domain. GTP contacts are provided by residues 166 to 173 (GLPNAGKS), 191 to 195 (FTTLN), 213 to 216 (DLPG), 284 to 287 (NKMD), and 313 to 315 (SGL). Residues Ser173 and Thr193 each contribute to the Mg(2+) site. The region spanning 354 to 432 (RLEEDEEDIQ…VFEYELEWMD (79 aa)) is the OCT domain.

This sequence belongs to the TRAFAC class OBG-HflX-like GTPase superfamily. OBG GTPase family. As to quaternary structure, monomer. The cofactor is Mg(2+).

The protein resides in the cytoplasm. In terms of biological role, an essential GTPase which binds GTP, GDP and possibly (p)ppGpp with moderate affinity, with high nucleotide exchange rates and a fairly low GTP hydrolysis rate. Plays a role in control of the cell cycle, stress response, ribosome biogenesis and in those bacteria that undergo differentiation, in morphogenesis control. In Mesoplasma florum (strain ATCC 33453 / NBRC 100688 / NCTC 11704 / L1) (Acholeplasma florum), this protein is GTPase Obg.